Consider the following 240-residue polypeptide: tRNA (guanine-N(1)-)-methyltransferase (240 aa).

S-adenosyl-L-methionine-binding positions include G110 and 130-135 (VGDYVL).

Belongs to the RNA methyltransferase TrmD family. Homodimer.

Its subcellular location is the cytoplasm. The enzyme catalyses guanosine(37) in tRNA + S-adenosyl-L-methionine = N(1)-methylguanosine(37) in tRNA + S-adenosyl-L-homocysteine + H(+). In terms of biological role, specifically methylates guanosine-37 in various tRNAs. The sequence is that of tRNA (guanine-N(1)-)-methyltransferase from Borrelia recurrentis (strain A1).